Reading from the N-terminus, the 706-residue chain is MMELEGEKPNYGEPRKYDPTFKGPIYNRGCTDIVCCIFFIICILGYVAVGILAWSQGDPRKVIYPTDSRGQFCGQAGTPLETKPLLFYFNIMKCASPMVLLEFQCPTTQMCVEKCPDKFMTLLKAYANKEDFKYYKNFCKEGLEGLTVTQILSSGLCPAMLTPSKPFTRRCFPALDQKKGGEITVGNNSKFDDGEGNIRDAKDLVAGVKNATVVIEARQVVMKIFEDYTQSWYWILIGLVIAMLISLLFIVLLRFLAGIMVWVMIVMVILVIGYGIFHCSMEYVSLKSEAGSNVTLKDLGFQTDFSVYLHIRQTWLAFIIILAIVEVVIILLLIFLRNRILIAIALIKEASRAIGYVMSALFYPLFTFALLSIVIAYWAVTAVFLSTSNQPIYKVFNDTACDHSRKICEPANFSTSSMKAECPDSKCLFAFYGGETVYHKYLIGLQFYNVFLFFWCANFVTALGQMTLAGAFASYYWALVKPDDMPAFPIFSSLGRSLRYHTGSLAFGSLILSIIQIIRVLLEYIDHKLQGTQNKCTKFLLCCLKCCFWCLEKFIKFINRNAYIMVAIYGKNFCTSAKDAFFLLMRNMIRVAVLDKVTDFLLFLGKLLIVGLVGIFAFFFFSGRVKAFENTAPNLHYYWVPILTVVVGSYLIAHGFFSVYAMCVDTLFLCFLEDLERNDGSAERPYLMSDRLLKVLNKKNKPEPAE.

Over 1 to 32 (MMELEGEKPNYGEPRKYDPTFKGPIYNRGCTD) the chain is Cytoplasmic. A helical transmembrane segment spans residues 33 to 53 (IVCCIFFIICILGYVAVGILA). Over 54–232 (WSQGDPRKVI…KIFEDYTQSW (179 aa)) the chain is Extracellular. 2 N-linked (GlcNAc...) asparagine glycosylation sites follow: Asn187 and Asn210. The helical transmembrane segment at 233 to 253 (YWILIGLVIAMLISLLFIVLL) threads the bilayer. The Cytoplasmic portion of the chain corresponds to 254–256 (RFL). The chain crosses the membrane as a helical span at residues 257–277 (AGIMVWVMIVMVILVIGYGIF). Over 278-315 (HCSMEYVSLKSEAGSNVTLKDLGFQTDFSVYLHIRQTW) the chain is Extracellular. N-linked (GlcNAc...) asparagine glycosylation occurs at Asn293. A helical transmembrane segment spans residues 316-336 (LAFIIILAIVEVVIILLLIFL). Residues 337–364 (RNRILIAIALIKEASRAIGYVMSALFYP) are Cytoplasmic-facing. The chain crosses the membrane as a helical span at residues 365–385 (LFTFALLSIVIAYWAVTAVFL). The Extracellular segment spans residues 386–454 (STSNQPIYKV…LQFYNVFLFF (69 aa)). 2 N-linked (GlcNAc...) asparagine glycosylation sites follow: Asn397 and Asn412. Residues 455–477 (WCANFVTALGQMTLAGAFASYYW) traverse the membrane as a helical segment. The Cytoplasmic portion of the chain corresponds to 478–504 (ALVKPDDMPAFPIFSSLGRSLRYHTGS). Residues 505–525 (LAFGSLILSIIQIIRVLLEYI) form a helical membrane-spanning segment. The Extracellular segment spans residues 526–599 (DHKLQGTQNK…RVAVLDKVTD (74 aa)). A helical transmembrane segment spans residues 600–620 (FLLFLGKLLIVGLVGIFAFFF). Over 621 to 638 (FSGRVKAFENTAPNLHYY) the chain is Cytoplasmic. A helical membrane pass occupies residues 639 to 659 (WVPILTVVVGSYLIAHGFFSV). Topologically, residues 660-706 (YAMCVDTLFLCFLEDLERNDGSAERPYLMSDRLLKVLNKKNKPEPAE) are extracellular.

It belongs to the CTL (choline transporter-like) family.

The protein localises to the cell membrane. The protein resides in the mitochondrion outer membrane. It carries out the reaction choline(out) + n H(+)(in) = choline(in) + n H(+)(out). The enzyme catalyses ethanolamine(out) + n H(+)(in) = ethanolamine(in) + n H(+)(out). Choline/H+ antiporter, mainly in mitochodria. Also acts as a low-affinity ethanolamine/H+ antiporter, regulating the supply of extracellular ethanolamine (Etn) for the CDP-Etn pathway, redistribute intracellular Etn and balance the CDP-Cho and CDP-Etn arms of the Kennedy pathway. The sequence is that of Choline transporter-like protein 2 (slc44a2) from Salmo salar (Atlantic salmon).